The chain runs to 489 residues: Cytochrome P450-DIT2 (489 aa).

C435 is a heme binding site.

It belongs to the cytochrome P450 family. Heme serves as cofactor.

In terms of biological role, involved in spore wall maturation. Thought to catalyze the oxidation of tyrosine residues in the formation of LL-dityrosine a precursor of the spore wall. This Saccharomyces cerevisiae (strain ATCC 204508 / S288c) (Baker's yeast) protein is Cytochrome P450-DIT2 (DIT2).